A 364-amino-acid polypeptide reads, in one-letter code: Spermidine/putrescine import ATP-binding protein PotA (364 aa).

Residues 5-235 (LSFKDVSKGF…PVNRFVADFI (231 aa)) enclose the ABC transporter domain. 37–44 (GPSGCGKT) contacts ATP.

The protein belongs to the ABC transporter superfamily. Spermidine/putrescine importer (TC 3.A.1.11.1) family. In terms of assembly, the complex is composed of two ATP-binding proteins (PotA), two transmembrane proteins (PotB and PotC) and a solute-binding protein (PotD).

It is found in the cell membrane. The enzyme catalyses ATP + H2O + polyamine-[polyamine-binding protein]Side 1 = ADP + phosphate + polyamineSide 2 + [polyamine-binding protein]Side 1.. Its function is as follows. Part of the ABC transporter complex PotABCD involved in spermidine/putrescine import. Responsible for energy coupling to the transport system. This is Spermidine/putrescine import ATP-binding protein PotA from Staphylococcus epidermidis (strain ATCC 35984 / DSM 28319 / BCRC 17069 / CCUG 31568 / BM 3577 / RP62A).